We begin with the raw amino-acid sequence, 337 residues long: Inositol 2-dehydrogenase (337 aa).

This sequence belongs to the Gfo/Idh/MocA family. Homotetramer.

It carries out the reaction myo-inositol + NAD(+) = scyllo-inosose + NADH + H(+). Functionally, involved in the oxidation of myo-inositol (MI) to 2-keto-myo-inositol (2KMI or 2-inosose). This Serratia proteamaculans (strain 568) protein is Inositol 2-dehydrogenase.